Consider the following 527-residue polypeptide: Glucose-6-phosphate isomerase (527 aa).

Glu323 serves as the catalytic Proton donor. Catalysis depends on residues His352 and Lys454.

This sequence belongs to the GPI family.

Its subcellular location is the cytoplasm. The catalysed reaction is alpha-D-glucose 6-phosphate = beta-D-fructose 6-phosphate. It functions in the pathway carbohydrate biosynthesis; gluconeogenesis. The protein operates within carbohydrate degradation; glycolysis; D-glyceraldehyde 3-phosphate and glycerone phosphate from D-glucose: step 2/4. Functionally, catalyzes the reversible isomerization of glucose-6-phosphate to fructose-6-phosphate. This chain is Glucose-6-phosphate isomerase, found in Prochlorococcus marinus (strain MIT 9301).